Consider the following 338-residue polypeptide: Uroporphyrinogen decarboxylase (338 aa).

Residues 27–31 (RQAGR), D77, Y151, S203, and H317 contribute to the substrate site.

The protein belongs to the uroporphyrinogen decarboxylase family. Homodimer.

It localises to the cytoplasm. It carries out the reaction uroporphyrinogen III + 4 H(+) = coproporphyrinogen III + 4 CO2. Its pathway is porphyrin-containing compound metabolism; protoporphyrin-IX biosynthesis; coproporphyrinogen-III from 5-aminolevulinate: step 4/4. Catalyzes the decarboxylation of four acetate groups of uroporphyrinogen-III to yield coproporphyrinogen-III. The polypeptide is Uroporphyrinogen decarboxylase (Wolbachia pipientis wMel).